Reading from the N-terminus, the 198-residue chain is Neutrophil gelatinase-associated lipocalin (198 aa).

The N-terminal stretch at 1 to 20 (MGLGVLCLALVLLGVLQSQA) is a signal peptide. Q21 is modified (pyrrolidone carboxylic acid). 72–74 (YST) contacts a carboxymycobactin. The N-linked (GlcNAc...) asparagine glycan is linked to N85. A disulfide bond links C96 and C195. Y126 lines the enterobactin pocket. A carboxymycobactin contacts are provided by K145, K154, and Y158. K154 contributes to the enterobactin binding site.

This sequence belongs to the calycin superfamily. Lipocalin family. In terms of assembly, monomer. Homodimer; disulfide-linked. Heterodimer; disulfide-linked with MMP9. As to expression, detected in the ureteric bud in embryonic kidney (at protein level).

The protein resides in the secreted. It localises to the cytoplasmic granule lumen. Its subcellular location is the cytoplasmic vesicle lumen. In terms of biological role, iron-trafficking protein involved in multiple processes such as apoptosis, innate immunity and renal development. Binds iron through association with 2,3-dihydroxybenzoic acid (2,3-DHBA), a siderophore that shares structural similarities with bacterial enterobactin, and delivers or removes iron from the cell, depending on the context. Iron-bound form (holo-24p3) is internalized following binding to the SLC22A17 (24p3R) receptor, leading to release of iron and subsequent increase of intracellular iron concentration. In contrast, association of the iron-free form (apo-24p3) with the SLC22A17 (24p3R) receptor is followed by association with an intracellular siderophore, iron chelation and iron transfer to the extracellular medium, thereby reducing intracellular iron concentration. Involved in apoptosis due to interleukin-3 (IL3) deprivation: iron-loaded form increases intracellular iron concentration without promoting apoptosis, while iron-free form decreases intracellular iron levels, inducing expression of the proapoptotic protein BCL2L11/BIM, resulting in apoptosis. Involved in innate immunity; limits bacterial proliferation by sequestering iron bound to microbial siderophores, such as enterobactin. Can also bind siderophores from M.tuberculosis. This chain is Neutrophil gelatinase-associated lipocalin (Lcn2), found in Rattus norvegicus (Rat).